A 343-amino-acid chain; its full sequence is CCN family member 3 (343 aa).

The N-terminal stretch at 1-18 (MTPHLALCFILLIQQVAS) is a signal peptide. Residues 19 to 90 (QKCPSQCDQC…RMETGTCMAL (72 aa)) form the IGFBP N-terminal domain. 6 disulfide bridges follow: Cys-21–Cys-46, Cys-25–Cys-48, Cys-28–Cys-49, Cys-35–Cys-52, Cys-60–Cys-74, and Cys-66–Cys-87. A VWFC domain is found at 93 to 159 (NSCVFDGVVY…GECCEKWVCD (67 aa)). The TSP type-1 domain occupies 190–235 (ACIAQTTEWSACSKTCGMGVSSRVTNRNARCEMQKQIRLCMVRSCE). Intrachain disulfides connect Cys-249/Cys-286, Cys-266/Cys-300, Cys-277/Cys-316, Cys-280/Cys-318, and Cys-285/Cys-322. A CTCK domain is found at 249-323 (CVRVRKTTKP…STCVCHYNCP (75 aa)). Residue Asn-265 is glycosylated (N-linked (GlcNAc...) asparagine).

It belongs to the CCN family.

The protein resides in the secreted. Its subcellular location is the cytoplasm. The protein localises to the cell junction. It is found in the gap junction. Functionally, immediate-early protein playing a role in various cellular processes including proliferation, adhesion, migration, differentiation and survival. Acts by binding to integrins or membrane receptors such as NOTCH1. The chain is CCN family member 3 (ccn3) from Xenopus laevis (African clawed frog).